Reading from the N-terminus, the 718-residue chain is Neutral ceramidase B (718 aa).

An N-terminal signal peptide occupies residues 1 to 20 (MINSFKKLIILISLVIILLS). Asn-224 and Asn-252 each carry an N-linked (GlcNAc...) asparagine glycan. Ser-298 functions as the Nucleophile in the catalytic mechanism. N-linked (GlcNAc...) asparagine glycans are attached at residues Asn-358, Asn-378, Asn-391, Asn-421, Asn-422, Asn-577, Asn-610, and Asn-614.

This sequence belongs to the neutral ceramidase family.

The protein resides in the secreted. The enzyme catalyses an N-acylsphing-4-enine + H2O = sphing-4-enine + a fatty acid. Hydrolyzes the sphingolipid ceramide into sphingosine and free fatty acid. The sequence is that of Neutral ceramidase B (dcd2B) from Dictyostelium discoideum (Social amoeba).